Consider the following 173-residue polypeptide: Adenine phosphoribosyltransferase (173 aa).

This sequence belongs to the purine/pyrimidine phosphoribosyltransferase family. In terms of assembly, homodimer.

It is found in the cytoplasm. It carries out the reaction AMP + diphosphate = 5-phospho-alpha-D-ribose 1-diphosphate + adenine. It participates in purine metabolism; AMP biosynthesis via salvage pathway; AMP from adenine: step 1/1. Its function is as follows. Catalyzes a salvage reaction resulting in the formation of AMP, that is energically less costly than de novo synthesis. The sequence is that of Adenine phosphoribosyltransferase from Caldanaerobacter subterraneus subsp. tengcongensis (strain DSM 15242 / JCM 11007 / NBRC 100824 / MB4) (Thermoanaerobacter tengcongensis).